The primary structure comprises 87 residues: Serine protease inhibitor Kazal-type 12 (87 aa).

The signal sequence occupies residues 1 to 22 (MKPAGAFLLLISLACLFLSVDA). A Kazal-like domain is found at 26-87 (GGFQAFCSNY…KLGFKHEGKC (62 aa)). 3 disulfide bridges follow: Cys-32–Cys-68, Cys-46–Cys-65, and Cys-54–Cys-87.

In terms of tissue distribution, expressed in epydiymis, in the caput.

Its subcellular location is the secreted. Functionally, inhibits trypsin. The protein is Serine protease inhibitor Kazal-type 12 (Spink12) of Mus musculus (Mouse).